The following is a 924-amino-acid chain: Type II inositol 3,4-bisphosphate 4-phosphatase (924 aa).

Residues 1-13 (MEIKEEGASEEGQ) are compositionally biased toward basic and acidic residues. 3 disordered regions span residues 1–25 (MEIKEEGASEEGQHFLPTAQASDPG), 481–516 (ILKKPPSPKSSTEESSPQDQPPLMRGQDSIPHHSDY), and 546–569 (DGGSEGSGGNNDGEKEPSLADAIP). The C2 domain maps to 23-165 (DPGDCQFTSI…LKSKEQLLVL (143 aa)).

It belongs to the inositol 3,4-bisphosphate 4-phosphatase family.

The enzyme catalyses a 1,2-diacyl-sn-glycero-3-phospho-(1D-myo-inositol-3,4-bisphosphate) + H2O = a 1,2-diacyl-sn-glycero-3-phospho-(1D-myo-inositol-3-phosphate) + phosphate. It catalyses the reaction 1D-myo-inositol 1,3,4-trisphosphate + H2O = 1D-myo-inositol 1,3-bisphosphate + phosphate. The catalysed reaction is 1D-myo-inositol 3,4-bisphosphate + H2O = 1D-myo-inositol 3-phosphate + phosphate. It functions in the pathway signal transduction; phosphatidylinositol signaling pathway. Strongly inhibited by inositol hexakisphosphate. In terms of biological role, catalyzes the hydrolysis of the 4-position phosphate of phosphatidylinositol 3,4-bisphosphate, inositol 1,3,4-trisphosphate and inositol 3,4-bisphosphate. Plays a role in the late stages of macropinocytosis by dephosphorylating phosphatidylinositol 3,4-bisphosphate in membrane ruffles. Antagonizes the PI3K-AKT/PKB signaling pathway by dephosphorylating phosphoinositides and thereby modulating cell cycle progression and cell survival. This Pongo abelii (Sumatran orangutan) protein is Type II inositol 3,4-bisphosphate 4-phosphatase (INPP4B).